The primary structure comprises 322 residues: MVPSLALVPGEPAGIGPELCIRLAQQPRSDAHLIVYADPDTLHSAAKALCLSVRLLDPDQPARLPGDLPLHPIRQAAPTRFGTPDPANAAAVIAGLLGAAGDCLSGKLQGIVTGPVHKAVINAGGIAYTGTTELLAAQAGCPVVMMLANSIVRVALVTTHLPLRAVPEAITAEALARCLRITATAMQRDFGLEHPRIAVLGLNPHAGEDGLLGREELDVIIPVLDQLRSEGMQLIGPLPADTAFLPQKLTDFDAVVAMYHDQGLPVLKYSGFEQAVNITLGLPYPRVAVDHGTALELAGRGVADPSSLLAATALCARLAARS.

T132 is a substrate binding site. A divalent metal cation contacts are provided by H160, H205, and H260. Substrate is bound by residues K268, N277, and R286.

It belongs to the PdxA family. Homodimer. Zn(2+) is required as a cofactor. It depends on Mg(2+) as a cofactor. Requires Co(2+) as cofactor.

Its subcellular location is the cytoplasm. It carries out the reaction 4-(phosphooxy)-L-threonine + NAD(+) = 3-amino-2-oxopropyl phosphate + CO2 + NADH. It participates in cofactor biosynthesis; pyridoxine 5'-phosphate biosynthesis; pyridoxine 5'-phosphate from D-erythrose 4-phosphate: step 4/5. Catalyzes the NAD(P)-dependent oxidation of 4-(phosphooxy)-L-threonine (HTP) into 2-amino-3-oxo-4-(phosphooxy)butyric acid which spontaneously decarboxylates to form 3-amino-2-oxopropyl phosphate (AHAP). This is 4-hydroxythreonine-4-phosphate dehydrogenase from Xanthomonas campestris pv. campestris (strain B100).